Here is a 96-residue protein sequence, read N- to C-terminus: Co-chaperonin GroES (96 aa).

The protein belongs to the GroES chaperonin family. In terms of assembly, heptamer of 7 subunits arranged in a ring. Interacts with the chaperonin GroEL.

It localises to the cytoplasm. Together with the chaperonin GroEL, plays an essential role in assisting protein folding. The GroEL-GroES system forms a nano-cage that allows encapsulation of the non-native substrate proteins and provides a physical environment optimized to promote and accelerate protein folding. GroES binds to the apical surface of the GroEL ring, thereby capping the opening of the GroEL channel. This is Co-chaperonin GroES from Myxococcus xanthus (strain DK1622).